Reading from the N-terminus, the 270-residue chain is Interleukin-33 (270 aa).

The segment at 1 to 65 (MKPKMKYSTN…EACYFRRETT (65 aa)) is homeodomain-like HTH domain. Positions 1–94 (MKPKMKYSTN…CQQQSTVESF (94 aa)) are excised as a propeptide. An interaction with RELA region spans residues 64 to 111 (TTKRPSLKTDRKHKRHLVLAACQQQSTVESFAFGISGVQKYTRALHDS).

Belongs to the IL-1 family. Highly divergent. Forms a 1:1:1 heterotrimeric complex with its primary high-affinity receptor IL1RL1 and the coreceptor IL1RAP. Interacts with cargo receptor TMED10; the interaction mediates the translocation from the cytoplasm into the ERGIC (endoplasmic reticulum-Golgi intermediate compartment) and thereby secretion. In terms of processing, the full-length protein can be released from cells and is able to signal via the IL1RL1/ST2 receptor. However, proteolytic processing by CELA1, CSTG/cathepsin G and ELANE/neutrophil elastase produces C-terminal peptides that are more active than the unprocessed full-length protein. May also be proteolytically processed by calpains. Proteolytic cleavage mediated by apoptotic caspases including CASP3 and CASP7 results in IL33 inactivation. In vitro proteolytic cleavage by CASP1 was reported but could not be confirmed in vivo suggesting that IL33 is probably not a direct substrate for that caspase.

It localises to the nucleus. It is found in the chromosome. Its subcellular location is the cytoplasm. The protein localises to the cytoplasmic vesicle. The protein resides in the secretory vesicle. It localises to the secreted. Functionally, cytokine that binds to and signals through the IL1RL1/ST2 receptor which in turn activates NF-kappa-B and MAPK signaling pathways in target cells. Involved in the maturation of Th2 cells inducing the secretion of T-helper type 2-associated cytokines. Also involved in activation of mast cells, basophils, eosinophils and natural killer cells. Acts as a chemoattractant for Th2 cells, and may function as an 'alarmin', that amplifies immune responses during tissue injury. Induces rapid UCP2-dependent mitochondrial rewiring that attenuates the generation of reactive oxygen species and preserves the integrity of Krebs cycle required for persistent production of itaconate and subsequent GATA3-dependent differentiation of inflammation-resolving alternatively activated macrophages. Its function is as follows. In quiescent endothelia the uncleaved form is constitutively and abundantly expressed, and acts as a chromatin-associated nuclear factor with transcriptional repressor properties, it may sequester nuclear NF-kappaB/RELA, lowering expression of its targets. This form is rapidely lost upon angiogenic or pro-inflammatory activation. This chain is Interleukin-33 (IL33), found in Pongo abelii (Sumatran orangutan).